We begin with the raw amino-acid sequence, 1262 residues long: SCL-interrupting locus protein homolog (1262 aa).

Positions 1-992 (MNTRFPSSKM…IDSPTKVKKN (992 aa)) are interaction with RBM14. The tract at residues 220 to 762 (YKHGYITMDE…VSMEAQSSPG (543 aa)) is interaction with CPAP. Disordered stretches follow at residues 369 to 409 (RSSQ…QKIS), 454 to 551 (LCDA…LAPQ), and 650 to 670 (GGMGAYSPHSNGEPSPVAGPS). 3 stretches are compositionally biased toward polar residues: residues 473-493 (PTNQLSQDTALRQSRGKQSST), 500-512 (QFRNTNAKPSLSV), and 540-551 (TLDSRQPSLAPQ). The PIN1-binding stretch occupies residues 567–760 (PMELQVPTPS…ELVSMEAQSS (194 aa)). Serine 733 and serine 760 each carry phosphoserine. Disordered regions lie at residues 782–804 (NAAGDDQEPDSQPKQDDTKISSE), 883–904 (APTEGASNSTELPQGTKDEPYR), 925–959 (NASQETEEPPTKAVVTNRECAKTQNTHHARKKRHN), and 1106–1129 (SSDNSEDEEEPPSHADSESDHVLN). Positions 792–803 (SQPKQDDTKISS) are enriched in basic and acidic residues. A compositionally biased stretch (polar residues) spans 883–895 (APTEGASNSTELP). Positions 949 to 959 (NTHHARKKRHN) are enriched in basic residues. At serine 1110 the chain carries Phosphoserine. Over residues 1116-1128 (PPSHADSESDHVL) the composition is skewed to basic and acidic residues.

As to quaternary structure, homodimer. Interacts with PIN1 via its WW domain. This interaction is dependent on Stil mitotic phosphorylation. Interacts with CPAP. Interacts with RBM14 and this interaction interferes with the interaction of STIL with CPAP. Forms a complex with CPAP and SASS6. nteracts (via N-terminus) with CEP85; this interaction is essential for efficient centriolar targeting of STIL and subsequent PLK4 activation. Post-translationally, ubiquitinated. Phosphorylated following the activation of the mitotic checkpoint. In terms of tissue distribution, ubiquitously expressed in adult and fetal tissues. Highly expressed in hematopoietic tissues such as thymus, bone marrow and spleen.

It is found in the cytoplasm. Its subcellular location is the cytosol. The protein localises to the cytoskeleton. It localises to the microtubule organizing center. The protein resides in the centrosome. It is found in the centriole. Its subcellular location is the cell cortex. Functionally, immediate-early gene. Plays an important role in embryonic development as well as in cellular growth and proliferation; its long-term silencing affects cell survival and cell cycle distribution as well as decreases CDK1 activity correlated with reduced phosphorylation of CDK1. Plays a role as a positive regulator of the sonic hedgehog pathway, acting downstream of PTCH1. Plays an important role in the regulation of centriole duplication. Required for the onset of procentriole formation and proper mitotic progression. During procentriole formation, is essential for the correct loading of SASS6 and CPAP to the base of the procentriole to initiate procentriole assembly. In complex with STIL acts as a modulator of PLK4-driven cytoskeletal rearrangements and directional cell motility. The chain is SCL-interrupting locus protein homolog (Stil) from Mus musculus (Mouse).